We begin with the raw amino-acid sequence, 280 residues long: Thymidylate synthase (280 aa).

Arg21 serves as a coordination point for dUMP. Residue His51 participates in (6R)-5,10-methylene-5,6,7,8-tetrahydrofolate binding. 142–143 (RR) lines the dUMP pocket. Catalysis depends on Cys162, which acts as the Nucleophile. Residues 182–185 (RSAD), Asn193, and 223–225 (HLY) contribute to the dUMP site. Asp185 provides a ligand contact to (6R)-5,10-methylene-5,6,7,8-tetrahydrofolate. Residue Ala279 participates in (6R)-5,10-methylene-5,6,7,8-tetrahydrofolate binding.

The protein belongs to the thymidylate synthase family. Bacterial-type ThyA subfamily. Homodimer.

The protein localises to the cytoplasm. The catalysed reaction is dUMP + (6R)-5,10-methylene-5,6,7,8-tetrahydrofolate = 7,8-dihydrofolate + dTMP. It functions in the pathway pyrimidine metabolism; dTTP biosynthesis. In terms of biological role, catalyzes the reductive methylation of 2'-deoxyuridine-5'-monophosphate (dUMP) to 2'-deoxythymidine-5'-monophosphate (dTMP) while utilizing 5,10-methylenetetrahydrofolate (mTHF) as the methyl donor and reductant in the reaction, yielding dihydrofolate (DHF) as a by-product. This enzymatic reaction provides an intracellular de novo source of dTMP, an essential precursor for DNA biosynthesis. This Acinetobacter baumannii (strain AB307-0294) protein is Thymidylate synthase.